The primary structure comprises 198 residues: Molybdopterin synthase catalytic subunit (198 aa).

Residues 1 to 27 (MASQPPQEPTPTATSTPSTSALASLPP) show a composition bias toward low complexity. Positions 1–40 (MASQPPQEPTPTATSTPSTSALASLPPHLDPTTYPRTLTS) are disordered. Substrate contacts are provided by residues 143-144 (HR), Lys-159, and 166-168 (KRE). Residues 176-198 (EWRENRERDAEGKVVAEKQEERE) form a disordered region.

The protein belongs to the MoaE family. MOCS2B subfamily. In terms of assembly, heterotetramer; composed of 2 small (MOCS2A) and 2 large (MOCS2B) subunits.

It is found in the cytoplasm. The catalysed reaction is 2 [molybdopterin-synthase sulfur-carrier protein]-C-terminal-Gly-aminoethanethioate + cyclic pyranopterin phosphate + H2O = molybdopterin + 2 [molybdopterin-synthase sulfur-carrier protein]-C-terminal Gly-Gly + 2 H(+). It functions in the pathway cofactor biosynthesis; molybdopterin biosynthesis. In terms of biological role, catalytic subunit of the molybdopterin synthase complex, a complex that catalyzes the conversion of precursor Z into molybdopterin. Acts by mediating the incorporation of 2 sulfur atoms from thiocarboxylated MOCS2A into precursor Z to generate a dithiolene group. This chain is Molybdopterin synthase catalytic subunit, found in Aspergillus clavatus (strain ATCC 1007 / CBS 513.65 / DSM 816 / NCTC 3887 / NRRL 1 / QM 1276 / 107).